A 509-amino-acid polypeptide reads, in one-letter code: MNEQQRLASQQVNSSTKKEEKDYSKYFESVYQPPSLKDAKKRGKEEVKIERDFGLPEEFRNFGTGRKFYIRTYGCQMNEHDTEVMAGIFTALGYEPTFSTEEADVVLLNTCAIRENAENKVFGELGHLKALKRRNPDLLIGVCGCMSQEESVVNKIMQKNQHVDMVFGTHNIHRLPYILKDAMFSKETVVEVWSKEGDVIENLPKVRRGDIKAWVNIMYGCDKFCTYCIVPYTRGKERSRRPEDIIQEIRHLAANGYKEITLLGQNVNAYGKDFEDIEYGLGDLMDELRKVDIARIRFTTSHPRDFDDHLIEVLGKGGNLVEHIHLPVQSGSTEMLKIMARKYSREHYLELVRKIKEAIPNAVLTTDIIVGFPNETDEQFEETMSLYREVGFDTAFTFIYSPREGTPAAKMKDNVPMEVKKERLQRLNALVNKLAIEKNNRYKGQIVEVLVDGESKNNPEVLAGYTRTNKLVNFVAPKSLIGQLVKVKVTDAKTWSLNGELVEEPIEVE.

Polar residues predominate over residues 1–15 (MNEQQRLASQQVNSS). Residues 1-26 (MNEQQRLASQQVNSSTKKEEKDYSKY) form a disordered region. The span at 16-25 (TKKEEKDYSK) shows a compositional bias: basic and acidic residues. An MTTase N-terminal domain is found at 66-184 (RKFYIRTYGC…LPYILKDAMF (119 aa)). 6 residues coordinate [4Fe-4S] cluster: Cys75, Cys111, Cys145, Cys221, Cys225, and Cys228. In terms of domain architecture, Radical SAM core spans 207–437 (RRGDIKAWVN…NALVNKLAIE (231 aa)). The TRAM domain occupies 440–503 (NRYKGQIVEV…TWSLNGELVE (64 aa)).

It belongs to the methylthiotransferase family. MiaB subfamily. Monomer. [4Fe-4S] cluster is required as a cofactor.

It localises to the cytoplasm. The enzyme catalyses N(6)-dimethylallyladenosine(37) in tRNA + (sulfur carrier)-SH + AH2 + 2 S-adenosyl-L-methionine = 2-methylsulfanyl-N(6)-dimethylallyladenosine(37) in tRNA + (sulfur carrier)-H + 5'-deoxyadenosine + L-methionine + A + S-adenosyl-L-homocysteine + 2 H(+). Catalyzes the methylthiolation of N6-(dimethylallyl)adenosine (i(6)A), leading to the formation of 2-methylthio-N6-(dimethylallyl)adenosine (ms(2)i(6)A) at position 37 in tRNAs that read codons beginning with uridine. This Bacillus cereus (strain AH187) protein is tRNA-2-methylthio-N(6)-dimethylallyladenosine synthase.